The primary structure comprises 975 residues: Glycine dehydrogenase (decarboxylating) (975 aa).

Lys-723 is subject to N6-(pyridoxal phosphate)lysine.

Belongs to the GcvP family. The glycine cleavage system is composed of four proteins: P, T, L and H. The cofactor is pyridoxal 5'-phosphate.

The catalysed reaction is N(6)-[(R)-lipoyl]-L-lysyl-[glycine-cleavage complex H protein] + glycine + H(+) = N(6)-[(R)-S(8)-aminomethyldihydrolipoyl]-L-lysyl-[glycine-cleavage complex H protein] + CO2. Functionally, the glycine cleavage system catalyzes the degradation of glycine. The P protein binds the alpha-amino group of glycine through its pyridoxal phosphate cofactor; CO(2) is released and the remaining methylamine moiety is then transferred to the lipoamide cofactor of the H protein. This Burkholderia ambifaria (strain ATCC BAA-244 / DSM 16087 / CCUG 44356 / LMG 19182 / AMMD) (Burkholderia cepacia (strain AMMD)) protein is Glycine dehydrogenase (decarboxylating).